Here is a 124-residue protein sequence, read N- to C-terminus: Protein MT1307 (124 aa).

Positions 1–35 form a signal peptide, tat-type signal; that stretch reads MTTMITLRRRFAVAVAGVATAAATTVTLAPAPANA.

The protein to M.tuberculosis Rv1813c. Predicted to be exported by the Tat system. The position of the signal peptide cleavage has not been experimentally proven.

The protein is Protein MT1307 of Mycobacterium tuberculosis (strain CDC 1551 / Oshkosh).